The sequence spans 631 residues: Extracellular metalloproteinase mep (631 aa).

An N-terminal signal peptide occupies residues 1 to 19 (MHGLRLVCSIGTLPLVILA). Residues 20 to 241 (YPAASLHTTS…VHGVVDYVAD (222 aa)) constitute a propeptide that is removed on maturation. Asn-282, Asn-332, and Asn-364 each carry an N-linked (GlcNAc...) asparagine glycan. His-425 lines the Zn(2+) pocket. Glu-426 is a catalytic residue. His-429 is a Zn(2+) binding site. 2 N-linked (GlcNAc...) asparagine glycosylation sites follow: Asn-470 and Asn-505.

Belongs to the peptidase M36 family. The cofactor is Zn(2+).

The protein localises to the secreted. Secreted metalloproteinase that allows assimilation of proteinaceous substrates. This Aspergillus niger (strain ATCC MYA-4892 / CBS 513.88 / FGSC A1513) protein is Extracellular metalloproteinase mep (mep).